The primary structure comprises 133 residues: Ubiquitin-like FUBI-ribosomal protein eS30 fusion protein (133 aa).

Positions 84-110 (GKVRGQTPKVAKQEKKKKKTGRAKRRM) are disordered. Positions 97–110 (EKKKKKTGRAKRRM) are enriched in basic residues. Lys-125 is modified (N6-succinyllysine).

This sequence in the N-terminal section; belongs to the ubiquitin family. The protein in the C-terminal section; belongs to the eukaryotic ribosomal protein eS30 family. Component of the 40S subunit of the ribosome. FUBI is cleaved from ribosomal protein S30 by the deubiquitinase USP36 before the assembly of ribosomal protein S30 into pre-40S ribosomal particles. FUBI removal from ribosomal protein S30 is a crucial event for the final maturation of pre-40S particles.

It localises to the nucleus. Its subcellular location is the cytoplasm. May have pro-apoptotic activity. Functionally, component of the 40S subunit of the ribosome. Contributes to the assembly and function of 40S ribosomal subunits. The sequence is that of Ubiquitin-like FUBI-ribosomal protein eS30 fusion protein (Fau) from Mus musculus (Mouse).